The primary structure comprises 224 residues: uncharacterized protein (224 aa).

Residues 11-42 (YYCKYCQIFVKDTPFARRSHEQTYKHQDAIKK) form a Matrin-type zinc finger. Residues 67–80 (ATATTASAVSSELA) are compositionally biased toward low complexity. Disordered regions lie at residues 67-158 (ATAT…RNRE) and 172-224 (VKPK…YDQS). Over residues 87–98 (KEHPKLRPSKKK) the composition is skewed to basic residues. Residues 108 to 122 (TSSTETDTISTTHTS) are compositionally biased toward low complexity. The span at 175–199 (KNLDKVPKLAENEGNKSLESKESNE) shows a compositional bias: basic and acidic residues. The span at 203–216 (VFKKKKSGKLRTKS) shows a compositional bias: basic residues.

It is found in the nucleus. Its subcellular location is the nucleolus. This is an uncharacterized protein from Schizosaccharomyces pombe (strain 972 / ATCC 24843) (Fission yeast).